A 502-amino-acid polypeptide reads, in one-letter code: Thermosome subunit beta (502 aa).

It belongs to the TCP-1 chaperonin family. Forms a Heterooligomeric complex of two stacked eight-membered rings.

Its function is as follows. Molecular chaperone; binds unfolded polypeptides in vitro, and has a weak ATPase activity. The protein is Thermosome subunit beta (thsB) of Desulfurococcus mucosus (Desulfurococcus mobilis).